The primary structure comprises 137 residues: Urease subunit beta (137 aa).

The segment at Asn-113–Arg-137 is disordered.

It belongs to the urease beta subunit family. As to quaternary structure, heterotrimer of UreA (gamma), UreB (beta) and UreC (alpha) subunits. Three heterotrimers associate to form the active enzyme.

The protein resides in the cytoplasm. It catalyses the reaction urea + 2 H2O + H(+) = hydrogencarbonate + 2 NH4(+). The protein operates within nitrogen metabolism; urea degradation; CO(2) and NH(3) from urea (urease route): step 1/1. In Staphylococcus carnosus (strain TM300), this protein is Urease subunit beta.